A 221-amino-acid polypeptide reads, in one-letter code: Probable transaldolase (221 aa).

Catalysis depends on Lys-83, which acts as the Schiff-base intermediate with substrate.

This sequence belongs to the transaldolase family. Type 3B subfamily.

It localises to the cytoplasm. The catalysed reaction is D-sedoheptulose 7-phosphate + D-glyceraldehyde 3-phosphate = D-erythrose 4-phosphate + beta-D-fructose 6-phosphate. It participates in carbohydrate degradation; pentose phosphate pathway; D-glyceraldehyde 3-phosphate and beta-D-fructose 6-phosphate from D-ribose 5-phosphate and D-xylulose 5-phosphate (non-oxidative stage): step 2/3. Functionally, transaldolase is important for the balance of metabolites in the pentose-phosphate pathway. This chain is Probable transaldolase, found in Herpetosiphon aurantiacus (strain ATCC 23779 / DSM 785 / 114-95).